Consider the following 3184-residue polypeptide: Probable serine/threonine-protein kinase pats1 (3184 aa).

A compositionally biased stretch (pro residues) spans 369 to 378 (DPPPPPPSNS). 2 disordered regions span residues 369 to 516 (DPPP…QIPP) and 913 to 1013 (SITR…TSIL). Over residues 379–415 (SPPISKSTSNNNLNVSNYHNNNNNNNNSNSNLSNSGN) the composition is skewed to low complexity. A compositionally biased stretch (polar residues) spans 421 to 450 (DFQSQNLVKSYNRENSGNSLNSMLHQTSLP). The segment covering 451–512 (NNNNSNVVNN…NNNNSNNNNS (62 aa)) has biased composition (low complexity). The Myotubularin phosphatase domain occupies 842–1348 (CFPDHSLLQE…FQDTMWNEYF (507 aa)). Residues 913–934 (SITRATSPEDQNNGSSNYLLTP) are compositionally biased toward polar residues. Residues 935-993 (NSPNSSSSNLANNNNSNNNNINNNNNNNNNNNNNNNNNSNNNNNNNNNNNNNNNNNNNN) show a composition bias toward low complexity. Positions 1000–1013 (SRSTTIDNGQTSIL) are enriched in polar residues. LRR repeat units follow at residues 1391–1412 (FLET…STLY), 1416–1438 (GLRE…SSLV), 1439–1460 (KLEK…TVVL), 1467–1488 (SLTE…FSMF), 1491–1512 (SLKK…LGML), 1514–1535 (NLIE…GVGI), 1541–1563 (KLCI…GDLK), 1564–1585 (SLEK…FRQL), 1587–1608 (NLEE…VCFL), 1610–1631 (NLKK…ISQL), 1633–1654 (KLMI…IGQL), 1656–1678 (QLVS…MGLL), and 1680–1701 (NLVE…IVSL). One can recognise a Roc domain in the interval 1716–1910 (GQEQCYKMKL…EKLEALVQSQ (195 aa)). The interval 1716 to 1910 (GQEQCYKMKL…EKLEALVQSQ (195 aa)) is small GTPase-like. Residues 1729 to 1736 (GQENVGKT), 1797 to 1801 (DFAGQ), and 1854 to 1857 (THLD) contribute to the GTP site. One can recognise a COR domain in the interval 1918-2127 (PRSYMLLENL…KCYWKNGMIL (210 aa)). The Protein kinase domain maps to 2247-2519 (LMIEELIGEG…RLIKIAEAMF (273 aa)). ATP-binding positions include 2253 to 2261 (IGEGGAALV) and K2274. D2379 acts as the Proton acceptor in catalysis. Disordered regions lie at residues 2528–2609 (YQQQ…TISH) and 2652–2671 (NSIN…NSLL). Residues 2529 to 2555 (QQQQQQQQQQQQSSPSKSSSTSPIIKS) show a composition bias toward low complexity. Polar residues predominate over residues 2556–2576 (LNLSTVSELGESSNQTPKQNI). WD repeat units lie at residues 2745–2785 (PNQG…KYIQ), 2790–2829 (ANKD…KIKS), 2909–2947 (AHER…HTIE), 2949–2986 (AHSS…LVSE), and 2990–3040 (KHKD…NSRS). Positions 3055–3126 (GSSNSITNSN…NYYYSNNVNS (72 aa)) are enriched in low complexity. Positions 3055–3164 (GSSNSITNSN…TPPGSKGLMQ (110 aa)) are disordered. Residues 3141–3157 (HEQTSPNSATPLSSTPP) are compositionally biased toward polar residues.

Belongs to the protein kinase superfamily. TKL Ser/Thr protein kinase family. ROCO subfamily.

It catalyses the reaction L-seryl-[protein] + ATP = O-phospho-L-seryl-[protein] + ADP + H(+). The enzyme catalyses L-threonyl-[protein] + ATP = O-phospho-L-threonyl-[protein] + ADP + H(+). Functionally, may act as a serine/threonine-protein kinase and guanine-nucleotide releasing factor. Essential regulator of cytokinesis involved in the binding to actomyosin cytoskeleton. The protein is Probable serine/threonine-protein kinase pats1 (pats1) of Dictyostelium discoideum (Social amoeba).